The chain runs to 626 residues: Putative folylpolyglutamate synthase (626 aa).

An ATP-binding site is contributed by 144–147 (GKGS). Mg(2+)-binding residues include serine 168, glutamate 235, and histidine 263. ATP contacts are provided by arginine 412 and aspartate 430.

It belongs to the folylpolyglutamate synthase family.

The catalysed reaction is (6S)-5,6,7,8-tetrahydrofolyl-(gamma-L-Glu)(n) + L-glutamate + ATP = (6S)-5,6,7,8-tetrahydrofolyl-(gamma-L-Glu)(n+1) + ADP + phosphate + H(+). It functions in the pathway cofactor biosynthesis; tetrahydrofolylpolyglutamate biosynthesis. Conversion of folates to polyglutamate derivatives. The sequence is that of Putative folylpolyglutamate synthase (folC) from Dictyostelium discoideum (Social amoeba).